We begin with the raw amino-acid sequence, 427 residues long: Histidine--tRNA ligase (427 aa).

This sequence belongs to the class-II aminoacyl-tRNA synthetase family. As to quaternary structure, homodimer.

The protein resides in the cytoplasm. The enzyme catalyses tRNA(His) + L-histidine + ATP = L-histidyl-tRNA(His) + AMP + diphosphate + H(+). The protein is Histidine--tRNA ligase of Streptococcus suis (strain 98HAH33).